A 165-amino-acid polypeptide reads, in one-letter code: UPF0303 protein Bcep18194_A4700 (165 aa).

It belongs to the UPF0303 family.

This chain is UPF0303 protein Bcep18194_A4700, found in Burkholderia lata (strain ATCC 17760 / DSM 23089 / LMG 22485 / NCIMB 9086 / R18194 / 383).